Here is a 282-residue protein sequence, read N- to C-terminus: Putative hydrolase Bmul_3283/BMULJ_05242 (282 aa).

Residues E124, E126, and D155 each contribute to the Mg(2+) site.

The protein belongs to the FAH family. Mg(2+) is required as a cofactor.

This Burkholderia multivorans (strain ATCC 17616 / 249) protein is Putative hydrolase Bmul_3283/BMULJ_05242.